The following is a 236-amino-acid chain: Giant extracellular hemoglobin linker 2 chain (236 aa).

The LDL-receptor class A domain occupies 66-108 (NGCEPRHFQCGGSAMECISDLLTCDGSPDCANGADEDSDVCHI). Disulfide bonds link C68/C82, C75/C95, and C89/C106.

As to quaternary structure, disulfide-linked dimer of identical chains. A model is proposed for the subunit structure of the Tylorrhynchus hemoglobin, consisting of 216 polypeptides chains, 192 heme-containing chains, and 24 linker chains.

Acts as a linker for the assembly of heme-containing chains in the construction of giant hemoglobin. In Tylorrhynchus heterochetus (Japanese palolo worm), this protein is Giant extracellular hemoglobin linker 2 chain.